The chain runs to 321 residues: Probable arabinan endo-1,5-alpha-L-arabinosidase C (321 aa).

Positions M1–A18 are cleaved as a signal peptide. D33 acts as the Proton acceptor in catalysis. N192 is a glycosylation site (N-linked (GlcNAc...) asparagine). Catalysis depends on E200, which acts as the Proton donor. N-linked (GlcNAc...) asparagine glycosylation occurs at N224.

It belongs to the glycosyl hydrolase 43 family.

The protein localises to the secreted. It carries out the reaction Endohydrolysis of (1-&gt;5)-alpha-arabinofuranosidic linkages in (1-&gt;5)-arabinans.. It functions in the pathway glycan metabolism; L-arabinan degradation. Functionally, endo-1,5-alpha-L-arabinanase involved in degradation of pectin. Its preferred substrate is linear 1,5-alpha-L-arabinan. This Aspergillus fumigatus (strain ATCC MYA-4609 / CBS 101355 / FGSC A1100 / Af293) (Neosartorya fumigata) protein is Probable arabinan endo-1,5-alpha-L-arabinosidase C (abnC).